Here is a 94-residue protein sequence, read N- to C-terminus: Neurotoxin 213 (94 aa).

The first 22 residues, 1–22 (MLKFILTCTSVILFTAVEDSSC), serve as a signal peptide directing secretion. Positions 24 to 88 (KGGNYPISVY…YWDYHRNNCK (65 aa)) constitute an LCN-type CS-alpha/beta domain. 3 disulfide bridges follow: Cys39-Cys62, Cys48-Cys67, and Cys52-Cys69.

The protein belongs to the long (3 C-C) scorpion toxin superfamily. Expressed by the venom gland.

It is found in the secreted. In Lychas mucronatus (Chinese swimming scorpion), this protein is Neurotoxin 213.